The following is a 229-amino-acid chain: Cytochrome b6-f complex iron-sulfur subunit, chloroplastic (229 aa).

The transit peptide at 1–50 (MASSSLSPATQLGSSRSALMAMSSGLFVKPTKMNHQMVRKEKIGLRISCQ) directs the protein to the chloroplast. A helical membrane pass occupies residues 68 to 90 (LNLLLLGALSLPTGYMLVPYATF). A Rieske domain is found at 115 to 211 (AAEWLKTHGP…ADIDEAGKVL (97 aa)). 4 residues coordinate [2Fe-2S] cluster: C157, H159, C175, and H178. A disulfide bridge links C162 with C177. A Phosphoserine modification is found at S196.

Belongs to the Rieske iron-sulfur protein family. As to quaternary structure, the 4 large subunits of the cytochrome b6-f complex are cytochrome b6, subunit IV (17 kDa polypeptide, petD), cytochrome f and the Rieske protein, while the 4 small subunits are petG, petL, petM and petN. The complex functions as a dimer. Interacts with PGRL1A. Component of a mitochondrial large protein complex that contains, at least, MIC60, DGS1, TOM40, TOM20 proteins, and petC/RISP. [2Fe-2S] cluster serves as cofactor. Confined to photosynthetic tissues, with highest levels in flowers. In leaves, mostly localized in mesophyll cells. In stems, confined to the peripheral ring of chlorenchyma and adjoining groups of cells associated with the vascular bundles. In siliques, present in green wall of the fruit and in peduncle but not in the translucide white septum of the seeds.

It is found in the plastid. The protein resides in the chloroplast thylakoid membrane. It localises to the mitochondrion inner membrane. It carries out the reaction 2 oxidized [plastocyanin] + a plastoquinol + 2 H(+)(in) = 2 reduced [plastocyanin] + a plastoquinone + 4 H(+)(out). Its function is as follows. Essential protein for photoautotrophism. Confers resistance to photo-oxidative damages by contributing to the thermal dissipation of light energy and to lumenal acidification (increase of pH gradient). Component of the cytochrome b6-f complex, which mediates electron transfer between photosystem II (PSII) and photosystem I (PSI), cyclic electron flow around PSI, and state transitions. The polypeptide is Cytochrome b6-f complex iron-sulfur subunit, chloroplastic (Arabidopsis thaliana (Mouse-ear cress)).